The sequence spans 389 residues: 23S rRNA (uracil(747)-C(5))-methyltransferase RlmC (389 aa).

Residues C5, C13, C16, and C94 each coordinate [4Fe-4S] cluster. S-adenosyl-L-methionine contacts are provided by Q219, F248, E275, and N321. The Nucleophile role is filled by C348.

This sequence belongs to the class I-like SAM-binding methyltransferase superfamily. RNA M5U methyltransferase family. RlmC subfamily.

The enzyme catalyses uridine(747) in 23S rRNA + S-adenosyl-L-methionine = 5-methyluridine(747) in 23S rRNA + S-adenosyl-L-homocysteine + H(+). Its function is as follows. Catalyzes the formation of 5-methyl-uridine at position 747 (m5U747) in 23S rRNA. The sequence is that of 23S rRNA (uracil(747)-C(5))-methyltransferase RlmC from Mannheimia succiniciproducens (strain KCTC 0769BP / MBEL55E).